We begin with the raw amino-acid sequence, 548 residues long: Glucan endo-1,3-beta-glucosidase (548 aa).

Residues 1-36 (MPHDRKNSSRRAWAALCAAVLAVSGALVGVAAPASA) constitute a signal peptide (tat-type signal). The region spanning 38 to 396 (PATIPLTITN…PQAAYIKLDP (359 aa)) is the GH64 domain. The active-site Proton donor is glutamate 153. Aspartate 169 (proton acceptor) is an active-site residue. Residues 422 to 548 (GTGALRIGST…NQTEAQRWTL (127 aa)) form the Ricin B-type lectin domain.

Belongs to the glycosyl hydrolase 64 family. In terms of processing, predicted to be exported by the Tat system. The position of the signal peptide cleavage has not been experimentally proven.

The protein localises to the periplasm. The enzyme catalyses Hydrolysis of (1-&gt;3)-beta-D-glucosidic linkages in (1-&gt;3)-beta-D-glucans.. Its function is as follows. Lysis of cellular walls containing beta-1,3-glucans. Implicated in the defense against fungal pathogens. The sequence is that of Glucan endo-1,3-beta-glucosidase (glcI) from Arthrobacter sp. (strain YCWD3).